The sequence spans 301 residues: Probable alpha-L-glutamate ligase (301 aa).

Residues 104-287 form the ATP-grasp domain; sequence LQLLSRRGIG…VAGMIIEYLE (184 aa). Residues K141, 178 to 179, D187, and 211 to 213 contribute to the ATP site; these read EY and RSN. Mg(2+) is bound by residues D248, E260, and N262. 3 residues coordinate Mn(2+): D248, E260, and N262.

The protein belongs to the RimK family. Requires Mg(2+) as cofactor. Mn(2+) serves as cofactor.

The chain is Probable alpha-L-glutamate ligase from Pseudomonas savastanoi pv. phaseolicola (strain 1448A / Race 6) (Pseudomonas syringae pv. phaseolicola (strain 1448A / Race 6)).